The following is a 1048-amino-acid chain: MIVADRLNTTTSMVWFPDYENGVGDNDAPRSGTHRAIDMYRYVRDLVSTTNQDGPRTLSEAVEPIRSWVDRDREVNLKFVEMCIIDAYTTDRRQVDDDIDAQTVVILDAILTQDGTGLDSNGAQYYRDVVRTFHDRHIEHAKAIAENKRLVPLYVAMYSNWSNTSAPTRATMDIEAIRGRYTVSVPESMERPMVILFNDLTISEDLVVFATHGELIKYDTRYPPSSDAALAAMSSRRARKGGERDKRISLYMVRRGIYSPGMNYDIAHVHQTPGVGYVITVISNNAPTVDVPRSLVTALGMGGDDDQVVVSDVGGGVTYTASFVLNDITFVTEYLQHYTLLKCTDKATCIFVDETHLMKYARDWRRYTIASPRFIYEYNNFTVKFSATVESTRRDVARVSPYCRIRIYDAPNTQIMYGMANDITAHMIEYKSRERSIASLYAENLHNDQLLRINVRIMRDSKRVKREPGYLARQHRQVRRKLQAQKTGTNADVRSLIGVNNYARQCARLPTAVFDVDDVPEAKEHITYQLPNDRGTLYVYCDHDDAPYPGVVTNRLAGNKTEYPTVPCCYRLRRNANGDPDEGRTQSFYNTQRILNTQAFGKCPANLESVLMCQRYMSRDEVDAAGMETYFPKQSVVGDATAVRGGVNAGPNAAIEAVMRAVHAIKGRDSDPRRLVITTDRLADERSEMVSLLTCASQELFDMSATERNAWLNDTVSYFDPLRLVKLLQFHFDVNVYVYVRGARVKPVKSVRTTENGGVMLRFFEEYEQAWTDNDDVLVVPHHYAGADYHDLKVHESSVVIYVHSGTEISNLTYPHVEYIIFKRHRLVVPMIGKIYQRLLPKSMRNVYSFVYFDVVEDEDERDSLTVDEANALRILFYLSSGKSVSTEWSGKVSTTLNAPTTQTIDGIGRMVGVGGRALESMYSTEPLPSLAVDNHDHSMYYFDDNVKRKRLMNPEHSAKCQYAWYLNKLARVLLHLTAYTILKKGTLMSDLFLVDDVRFNRLHDSINTLFETGVVDMDSYGNLLIAEEERVLAIPSTRHVAWCTMHR.

The protein belongs to the ascovirus HvAV ORF146 family.

Its subcellular location is the virion. The protein is Putative structural protein ORF84 of Spodoptera frugiperda ascovirus 1a (SfAV-1a).